The chain runs to 147 residues: MPHFLVLNGPNLNRLGKREPAVYGSKTLTDLETDLFQFAERANIQLTFFQSNHEGDLIDALHEAEEQYDGVVFNPGAFTHYSYALRDAIASISLSVVEVHISNVHKREEFRHHSVLAPVCQGQIVGLGLEGYKLAIRYLVSEGGAVS.

The active-site Proton acceptor is Tyr23. Positions 74, 80, and 87 each coordinate substrate. The active-site Proton donor is the His100. Residues 101–102 (IS) and Arg111 contribute to the substrate site.

The protein belongs to the type-II 3-dehydroquinase family. Homododecamer.

The catalysed reaction is 3-dehydroquinate = 3-dehydroshikimate + H2O. Its pathway is metabolic intermediate biosynthesis; chorismate biosynthesis; chorismate from D-erythrose 4-phosphate and phosphoenolpyruvate: step 3/7. In terms of biological role, catalyzes a trans-dehydration via an enolate intermediate. This is 3-dehydroquinate dehydratase from Bacillus pumilus (strain SAFR-032).